Here is a 233-residue protein sequence, read N- to C-terminus: Lectin (233 aa).

Residues Asn-26 and Asn-108 are each glycosylated (N-linked (GlcNAc...) asparagine). 2 residues coordinate Mn(2+): Glu-118 and Asp-120. 4 residues coordinate Ca(2+): Asp-120, Trp-122, Asn-124, and Glu-129. Mn(2+) contacts are provided by Glu-129 and His-134.

Belongs to the leguminous lectin family. As to quaternary structure, monomer.

The protein localises to the secreted. Has metal-independent hemagglutinating activity towards erythrocytes from rabbit and human. Hemagglutinating activity is inhibited by glycoproteins fetuin, asialo-fetuin, thyroglobulin and azocasein but not by free carbohydrates. Inhibits ADP- and epinephrin-induced but not collagen-, fibrinogen, thrombin- or arachidonic acid-induced platelet aggregation in vitro. Has anticoagulant activity in vitro. This chain is Lectin, found in Bauhinia forficata (Brazilian orchid-tree).